A 427-amino-acid polypeptide reads, in one-letter code: MLDTVAPGPDIDVLMNDIGRKAKAAARPLGFASTEAKNSALNAMADAILANKAHILAENAKDLKDIEGTEMLASFVDRLTLNDKRVAEMAEGIRAIAALADPVGEVIAAWDRPNGLKIERVRTPLGVIGVIFESRPNVTADAGALCLKAGNAVILRCGSDSRRSSQAIHACLVKGLKAAGLPEHAIQLVPVTDRAAVGAMLRGLDGAIDVIVPRGGKSLVARVQSEARVPVFAHLEGLCHIYVDASADIEMAKKIIVNAKMRRTGICGAVETLLVDGAAIGTHLTPLLEALTDAGCEIRASPTVLKVAPGMKPATEEDWSTEYLDAIISVAVVDGISGAIAHIQTYSSNHTEAVIAEDPDVVARFFTEVDSAILLHNASTQFADGGEFGMGAEIGIATGKMHARGPVGVEQLTSFKYRVHGAGQTRP.

This sequence belongs to the gamma-glutamyl phosphate reductase family.

It localises to the cytoplasm. The enzyme catalyses L-glutamate 5-semialdehyde + phosphate + NADP(+) = L-glutamyl 5-phosphate + NADPH + H(+). It functions in the pathway amino-acid biosynthesis; L-proline biosynthesis; L-glutamate 5-semialdehyde from L-glutamate: step 2/2. Catalyzes the NADPH-dependent reduction of L-glutamate 5-phosphate into L-glutamate 5-semialdehyde and phosphate. The product spontaneously undergoes cyclization to form 1-pyrroline-5-carboxylate. In Rhizobium johnstonii (strain DSM 114642 / LMG 32736 / 3841) (Rhizobium leguminosarum bv. viciae), this protein is Gamma-glutamyl phosphate reductase.